A 77-amino-acid chain; its full sequence is Serine protease inhibitor 3 (77 aa).

The N-terminal stretch at 1 to 17 is a signal peptide; it reads MMFTPLIVLTLLVLATA. 4 cysteine pairs are disulfide-bonded: cysteine 21-cysteine 53, cysteine 30-cysteine 48, cysteine 33-cysteine 44, and cysteine 55-cysteine 68. The TIL domain maps to 21–74; sequence CGPNEQWSGCPKCELQSGESDKPCATICGEPKCYCSPDKYRRIPDGRCIRKIQC.

It is found in the secreted. Defends the organism against the host's proteinases. This chain is Serine protease inhibitor 3, found in Anisakis simplex (Herring worm).